The sequence spans 237 residues: Dihydroceramide fatty acyl 2-hydroxylase FAH1 (237 aa).

2 consecutive transmembrane segments (helical) span residues 50–70 and 80–100; these read LTLT…VWCI and LPEI…FEYV. Residues H102, H107, H123, H126, and H127 each coordinate Zn(2+). Helical transmembrane passes span 137-157 and 164-184; these read VFPP…AKAI and PALF…HYYL. The Zn(2+) site is built by H181, H185, H201, H204, and H205.

Belongs to the sterol desaturase family. Interacts with CYTB5-A, CYTB5-B, CYTB5-C and CYTB5-D. Interacts indirectly with BI-1 via CYTB5-D. It depends on Zn(2+) as a cofactor. In terms of tissue distribution, expressed in leaves, roots, flowers and seeds.

Its subcellular location is the endoplasmic reticulum membrane. It catalyses the reaction an N-(1,2-saturated acyl)sphinganine + 2 Fe(II)-[cytochrome b5] + O2 + 2 H(+) = an N-[(2'R)-hydroxyacyl]sphinganine + 2 Fe(III)-[cytochrome b5] + H2O. Its function is as follows. Fatty acid 2-hydroxylase involved in the alpha-hydroxylation of sphingolipid-associated very long-chain fatty acids (VLCFA). Probably involved in the resistance response to oxidative stress. The protein is Dihydroceramide fatty acyl 2-hydroxylase FAH1 of Arabidopsis thaliana (Mouse-ear cress).